Here is a 212-residue protein sequence, read N- to C-terminus: Small ribosomal subunit protein uS3 (212 aa).

The KH type-2 domain maps to 39-108 (IKNYIKERYK…EITISVVEVR (70 aa)).

Belongs to the universal ribosomal protein uS3 family. In terms of assembly, part of the 30S ribosomal subunit. Forms a tight complex with proteins S10 and S14.

Functionally, binds the lower part of the 30S subunit head. Binds mRNA in the 70S ribosome, positioning it for translation. In Aquifex aeolicus (strain VF5), this protein is Small ribosomal subunit protein uS3.